A 284-amino-acid polypeptide reads, in one-letter code: 4-hydroxybenzoate octaprenyltransferase (284 aa).

A run of 9 helical transmembrane segments spans residues 19–39, 42–62, 85–105, 107–127, 134–154, 165–185, 211–231, 233–253, and 261–281; these read IPIL…SHGL, ISYL…GCII, GQLS…VAFI, VLFL…LAIL, FFAI…FMAF, AWIF…IYAL, ILLF…YCDF, SFFY…YFLY, and CINA…MAVI.

It belongs to the UbiA prenyltransferase family. Mg(2+) is required as a cofactor.

Its subcellular location is the cell inner membrane. The enzyme catalyses all-trans-octaprenyl diphosphate + 4-hydroxybenzoate = 4-hydroxy-3-(all-trans-octaprenyl)benzoate + diphosphate. The protein operates within cofactor biosynthesis; ubiquinone biosynthesis. Its function is as follows. Catalyzes the prenylation of para-hydroxybenzoate (PHB) with an all-trans polyprenyl group. Mediates the second step in the final reaction sequence of ubiquinone-8 (UQ-8) biosynthesis, which is the condensation of the polyisoprenoid side chain with PHB, generating the first membrane-bound Q intermediate 3-octaprenyl-4-hydroxybenzoate. In Francisella tularensis subsp. novicida (strain U112), this protein is 4-hydroxybenzoate octaprenyltransferase.